The chain runs to 612 residues: Dihydroxy-acid dehydratase (612 aa).

A Mg(2+)-binding site is contributed by Asp81. Residue Cys122 participates in [2Fe-2S] cluster binding. Mg(2+) contacts are provided by Asp123 and Lys124. The residue at position 124 (Lys124) is an N6-carboxylysine. [2Fe-2S] cluster is bound at residue Cys193. Glu489 serves as a coordination point for Mg(2+). The Proton acceptor role is filled by Ser515.

This sequence belongs to the IlvD/Edd family. As to quaternary structure, homodimer. It depends on [2Fe-2S] cluster as a cofactor. The cofactor is Mg(2+).

It catalyses the reaction (2R)-2,3-dihydroxy-3-methylbutanoate = 3-methyl-2-oxobutanoate + H2O. It carries out the reaction (2R,3R)-2,3-dihydroxy-3-methylpentanoate = (S)-3-methyl-2-oxopentanoate + H2O. It functions in the pathway amino-acid biosynthesis; L-isoleucine biosynthesis; L-isoleucine from 2-oxobutanoate: step 3/4. It participates in amino-acid biosynthesis; L-valine biosynthesis; L-valine from pyruvate: step 3/4. In terms of biological role, functions in the biosynthesis of branched-chain amino acids. Catalyzes the dehydration of (2R,3R)-2,3-dihydroxy-3-methylpentanoate (2,3-dihydroxy-3-methylvalerate) into 2-oxo-3-methylpentanoate (2-oxo-3-methylvalerate) and of (2R)-2,3-dihydroxy-3-methylbutanoate (2,3-dihydroxyisovalerate) into 2-oxo-3-methylbutanoate (2-oxoisovalerate), the penultimate precursor to L-isoleucine and L-valine, respectively. This is Dihydroxy-acid dehydratase from Stenotrophomonas maltophilia (strain R551-3).